The sequence spans 238 residues: Pyridoxine 5'-phosphate synthase (238 aa).

Residue Asn-9 coordinates 3-amino-2-oxopropyl phosphate. Residue 11-12 (DH) coordinates 1-deoxy-D-xylulose 5-phosphate. A 3-amino-2-oxopropyl phosphate-binding site is contributed by Arg-20. His-45 serves as the catalytic Proton acceptor. 1-deoxy-D-xylulose 5-phosphate is bound by residues Arg-47 and His-52. Glu-72 acts as the Proton acceptor in catalysis. Residue Thr-102 coordinates 1-deoxy-D-xylulose 5-phosphate. Residue His-189 is the Proton donor of the active site. 3-amino-2-oxopropyl phosphate is bound by residues Gly-190 and 211-212 (GH).

Belongs to the PNP synthase family. In terms of assembly, homooctamer; tetramer of dimers.

The protein localises to the cytoplasm. The catalysed reaction is 3-amino-2-oxopropyl phosphate + 1-deoxy-D-xylulose 5-phosphate = pyridoxine 5'-phosphate + phosphate + 2 H2O + H(+). It participates in cofactor biosynthesis; pyridoxine 5'-phosphate biosynthesis; pyridoxine 5'-phosphate from D-erythrose 4-phosphate: step 5/5. Functionally, catalyzes the complicated ring closure reaction between the two acyclic compounds 1-deoxy-D-xylulose-5-phosphate (DXP) and 3-amino-2-oxopropyl phosphate (1-amino-acetone-3-phosphate or AAP) to form pyridoxine 5'-phosphate (PNP) and inorganic phosphate. The sequence is that of Pyridoxine 5'-phosphate synthase from Ehrlichia canis (strain Jake).